We begin with the raw amino-acid sequence, 392 residues long: Methylthioribose-1-phosphate isomerase (392 aa).

Asp-268 serves as the catalytic Proton donor.

This sequence belongs to the eIF-2B alpha/beta/delta subunits family. MtnA subfamily.

The protein localises to the cytoplasm. It is found in the nucleus. It carries out the reaction 5-(methylsulfanyl)-alpha-D-ribose 1-phosphate = 5-(methylsulfanyl)-D-ribulose 1-phosphate. The protein operates within amino-acid biosynthesis; L-methionine biosynthesis via salvage pathway; L-methionine from S-methyl-5-thio-alpha-D-ribose 1-phosphate: step 1/6. In terms of biological role, catalyzes the interconversion of methylthioribose-1-phosphate (MTR-1-P) into methylthioribulose-1-phosphate (MTRu-1-P). The protein is Methylthioribose-1-phosphate isomerase of Ajellomyces capsulatus (strain G186AR / H82 / ATCC MYA-2454 / RMSCC 2432) (Darling's disease fungus).